The primary structure comprises 293 residues: ATP synthase gamma chain (293 aa).

This sequence belongs to the ATPase gamma chain family. As to quaternary structure, F-type ATPases have 2 components, CF(1) - the catalytic core - and CF(0) - the membrane proton channel. CF(1) has five subunits: alpha(3), beta(3), gamma(1), delta(1), epsilon(1). CF(0) has three main subunits: a, b and c.

The protein resides in the cell inner membrane. Functionally, produces ATP from ADP in the presence of a proton gradient across the membrane. The gamma chain is believed to be important in regulating ATPase activity and the flow of protons through the CF(0) complex. This Psychrobacter arcticus (strain DSM 17307 / VKM B-2377 / 273-4) protein is ATP synthase gamma chain.